The primary structure comprises 84 residues: Cell division topological specificity factor (84 aa).

Belongs to the MinE family.

Prevents the cell division inhibition by proteins MinC and MinD at internal division sites while permitting inhibition at polar sites. This ensures cell division at the proper site by restricting the formation of a division septum at the midpoint of the long axis of the cell. The chain is Cell division topological specificity factor from Paraburkholderia phymatum (strain DSM 17167 / CIP 108236 / LMG 21445 / STM815) (Burkholderia phymatum).